The following is a 498-amino-acid chain: ATP synthase subunit beta, chloroplastic (498 aa).

172 to 179 lines the ATP pocket; sequence GGAGVGKT.

Belongs to the ATPase alpha/beta chains family. As to quaternary structure, F-type ATPases have 2 components, CF(1) - the catalytic core - and CF(0) - the membrane proton channel. CF(1) has five subunits: alpha(3), beta(3), gamma(1), delta(1), epsilon(1). CF(0) has four main subunits: a(1), b(1), b'(1) and c(9-12).

The protein resides in the plastid. It localises to the chloroplast thylakoid membrane. It carries out the reaction ATP + H2O + 4 H(+)(in) = ADP + phosphate + 5 H(+)(out). Produces ATP from ADP in the presence of a proton gradient across the membrane. The catalytic sites are hosted primarily by the beta subunits. The chain is ATP synthase subunit beta, chloroplastic from Aspidistra elatior (Cast-iron plant).